A 37-amino-acid polypeptide reads, in one-letter code: Cytochrome b6-f complex subunit 5 (37 aa).

A helical transmembrane segment spans residues 5 to 25 (LLSGIVLGLIPITLAGLFVTA).

The protein belongs to the PetG family. The 4 large subunits of the cytochrome b6-f complex are cytochrome b6, subunit IV (17 kDa polypeptide, PetD), cytochrome f and the Rieske protein, while the 4 small subunits are PetG, PetL, PetM and PetN. The complex functions as a dimer.

It localises to the plastid. It is found in the chloroplast thylakoid membrane. Its function is as follows. Component of the cytochrome b6-f complex, which mediates electron transfer between photosystem II (PSII) and photosystem I (PSI), cyclic electron flow around PSI, and state transitions. PetG is required for either the stability or assembly of the cytochrome b6-f complex. This chain is Cytochrome b6-f complex subunit 5, found in Angiopteris evecta (Mule's foot fern).